The following is a 1872-amino-acid chain: E3 ubiquitin-protein ligase UBR2 (1872 aa).

Residues 96–172 form a UBR-type zinc finger; that stretch reads TACTRLCFPS…DAFKCKNELN (77 aa). A Glycyl lysine isopeptide (Lys-Gly) (interchain with G-Cter in ubiquitin) cross-link involves residue lysine 709. Residues 1134–1240 form an interaction with UBC2 region; it reads RYLMETAPHV…SSNTINSCCD (107 aa). The interval 1203–1227 is disordered; sequence NNSVDTSDISTPRTTSPSLSPTRIN. Positions 1212–1225 are enriched in low complexity; the sequence is STPRTTSPSLSPTR. Phosphoserine occurs at positions 1218 and 1222. The RING-type; atypical zinc-finger motif lies at 1241-1362; it reads DDCVFCKMPK…GLIYCPVCNS (122 aa).

This sequence belongs to the E3 ubiquitin-protein ligase UBR1-like family. In terms of assembly, interacts with MUB1, RPN4 and UBC2.

It is found in the cytoplasm. It carries out the reaction S-ubiquitinyl-[E2 ubiquitin-conjugating enzyme]-L-cysteine + [acceptor protein]-L-lysine = [E2 ubiquitin-conjugating enzyme]-L-cysteine + N(6)-ubiquitinyl-[acceptor protein]-L-lysine.. It functions in the pathway protein modification; protein ubiquitination. Functionally, E3 ubiquitin-protein ligase which probably functions outside the N-end rule pathway, since it lacks the residues essential for the degradation of N-end rule substrates. Mediates RPN4 ubiquitination and subsequent degradation. This chain is E3 ubiquitin-protein ligase UBR2 (UBR2), found in Saccharomyces cerevisiae (strain ATCC 204508 / S288c) (Baker's yeast).